Consider the following 303-residue polypeptide: Plasmodesmata-located protein 1 (303 aa).

A signal peptide spans 1–21 (MKLTYQFFIFWFFLPFFAISG). Residues 22–268 (DDDYKNLIFK…GEKRQHTERT (247 aa)) lie on the Extracellular side of the membrane. 2 Gnk2-homologous domains span residues 27-136 (NLIF…SSGF) and 141-248 (GTEM…YYSH). Cystine bridges form between cysteine 33–cysteine 108, cysteine 84–cysteine 93, cysteine 96–cysteine 127, cysteine 149–cysteine 226, cysteine 202–cysteine 211, and cysteine 214–cysteine 239. A helical membrane pass occupies residues 269–289 (IALAVGGVFVLGFVIVCLLVL). Residues 269–289 (IALAVGGVFVLGFVIVCLLVL) are necessary and sufficient for plasmodesmal targeting. Residues 290–303 (RSAMKKKSNKYDAY) lie on the Cytoplasmic side of the membrane.

This sequence belongs to the cysteine-rich repeat secretory protein family. Plasmodesmata-located proteins (PDLD) subfamily. As to quaternary structure, interacts with AZI1. Interacts with PDLP5. Does not interact with DIR1. In terms of assembly, (Microbial infection) Interacts with Grapevine fanleaf virus (GFLV) 2B-MP. Interacts with Cauliflower mosaic virus (CaMV) movement protein. In terms of tissue distribution, highly expressed in cell suspension. Expressed in epidermal and spongy mesophyll cells, and the cell wall interface at the base of the leaf trichome (at protein level). Expressed in haustoria-containing cells.

It is found in the cell membrane. The protein localises to the cell junction. It localises to the plasmodesma. Functionally, modulates cell-to-cell trafficking. Required for systemic acquired resistance (SAR) which is mediated by the signaling molecules azelaic acid (AzA), glycerol-3-phosphate (G3P), and salicylic acid (SA). Required for the proper localization and stability of AZI1 which is involved in SAR. Mediates callose deposition during downy mildew fungal infection around haustoria. Haustoria are unicellular protrusions from hyphae and function as the site of molecular exchange of nutrients and effectors between host and pathogen. This is Plasmodesmata-located protein 1 from Arabidopsis thaliana (Mouse-ear cress).